We begin with the raw amino-acid sequence, 266 residues long: Short-chain dehydrogenase/reductase atnB (266 aa).

Ile13, Asp57, and Asn85 together coordinate NADP(+). Active-site proton donor residues include Ser147 and Tyr166. 4 residues coordinate NADP(+): Tyr166, Lys170, Val199, and Thr201. The Lowers pKa of active site Tyr role is filled by Lys170.

This sequence belongs to the short-chain dehydrogenases/reductases (SDR) family.

It participates in secondary metabolite biosynthesis; terpenoid biosynthesis. Its function is as follows. Short-chain dehydrogenase/reductase; part of the gene cluster that mediates the biosynthesis of the meroterpenoids arthripenoids. The pathway begins with the HR-PKS atnH that catalyzes two chain-extension steps to form a reduced triketide, which then primes the SAT domain in the NR-PKS atnG to initiate three more cycles of extension to give a linear hexaketide corresponding to the polyketide part of arthripenoids. The FAD-dependent monooxygenase atnJ then performs an oxidative decarboxylation at C11 of the atnH/atnG product, via an electrophilic aromatic hydroxylation with concomitant ipso-decarboxylation. The membrane-bound polyprenyl transferase atnF then introduces a farnesyl group before the FAD-dependent monooxygenase atnK functions as the first epoxidase on terminal C12'-C13' olefin, followed by a second epoxidation on C7'-C8' catalyzed by atnA. The terpene cyclase/mutase atnI then initiates the sequential tricyclic ring formation through protonation of the terminal epoxide and catalyzes the regioselective and stereoselective 6/6/6-tricyclic ring formation. The cytochrome P450 monooxygenase atnM is responsible for hydroxylating both C1' and C10'. The next steps may involve ketoreduction and acetyl transfer by the ketoreductase atnB and the acetyltransferase atnC, and lead to the production of arthripenoid B, the final biosynthetic product of the atn cluster. The hydroquinone moiety in arthripenoid B is prone to undergo spontaneous oxidation to afford a benzoquinone compound, a key intermediate for generating structure diversity. For instance, addition of a cysteine followed by ring contraction gives arthripenoid A, tautomerization gives the main product arthripenoid C, addition of a molecular of water or amine affords arthripenoid D or E, respectively, and loss of one water forms arthripenoid F. The sequence is that of Short-chain dehydrogenase/reductase atnB from Arthrinium sp.